The following is a 286-amino-acid chain: Elongation factor Ts (286 aa).

The involved in Mg(2+) ion dislocation from EF-Tu stretch occupies residues 79-82 (TDFV).

Belongs to the EF-Ts family.

It is found in the cytoplasm. In terms of biological role, associates with the EF-Tu.GDP complex and induces the exchange of GDP to GTP. It remains bound to the aminoacyl-tRNA.EF-Tu.GTP complex up to the GTP hydrolysis stage on the ribosome. This is Elongation factor Ts from Wolbachia pipientis wMel.